A 706-amino-acid chain; its full sequence is GDNF-inducible zinc finger protein 1 (706 aa).

One can recognise a BTB domain in the interval cysteine 31–glutamate 103. Residues valine 149–alanine 165 are compositionally biased toward polar residues. 2 disordered regions span residues valine 149–arginine 220 and arginine 242–glutamate 308. Basic and acidic residues-rich tracts occupy residues proline 197–alanine 212 and arginine 242–alanine 277. 10 consecutive C2H2-type zinc fingers follow at residues phenylalanine 315 to histidine 337, tyrosine 346 to histidine 369, phenylalanine 375 to histidine 398, histidine 405 to histidine 427, tyrosine 433 to histidine 455, phenylalanine 461 to histidine 483, phenylalanine 489 to histidine 511, phenylalanine 517 to histidine 539, tyrosine 545 to histidine 567, and tyrosine 573 to histidine 595. Serine 611 is modified (phosphoserine).

It belongs to the krueppel C2H2-type zinc-finger protein family. Interacts with NCL. As to expression, expressed in several tissues, with highest levels in liver. Also expressed in embryos from 7 to 17 dpc.

The protein resides in the nucleus. The protein localises to the cytoplasm. It is found in the nucleolus. Its function is as follows. Transcriptional repressor that binds the GZF1 responsive element (GRE) (consensus: 5'-TGCGCN[TG][CA]TATA-3'). May be regulating VSX2/HOX10 expression. The chain is GDNF-inducible zinc finger protein 1 from Mus musculus (Mouse).